Consider the following 484-residue polypeptide: uncharacterized protein (484 aa).

Transmembrane regions (helical) follow at residues 19–39 (LSFG…MIFV), 78–98 (VNWG…WLIV), 110–130 (LFFM…GFII), 134–154 (IFAI…SNYL), 165–185 (FSPF…AGII), 199–219 (IVFL…IILG), 249–269 (TWYW…PFTF), 289–309 (ISVF…TIGL), 321–341 (ISTI…VFVL), 360–380 (LFLF…GVML), 398–418 (FGLI…ITSL), and 440–460 (LGAY…LALL).

Its subcellular location is the cell membrane. This is an uncharacterized protein from Mesomycoplasma hyopneumoniae (strain J / ATCC 25934 / NCTC 10110) (Mycoplasma hyopneumoniae).